We begin with the raw amino-acid sequence, 4835 residues long: MSGYFTDLQNAEVLRAAESIVSSGQAVLLCGPSASGRTALLSHLASKLGAKPPIPLHLTTAQDTRDLIGSYVMTNKPGDFRFILGPLAYAAQSGRWISIEEITTISQDSLLLLSSVVNTRTLSVGSYQISVHPDFRIHAKTSADPALLSTIVKSMFYPLVLPPLGNHLFQVLTKHCNRGICTILAHIHVQFETHRLTAGRISASDMVKWARRIDLDLKNGGAVLNKAVQEASAGTAATTLVSWLDDNTRMVMIKNAWEAFVLRYSKEQTRRAFLDILRLSLNIHEELMLSTLLKIKVDIRHDYTQKRLVCGRVSLPFYESPDERSLDDICRTNHTTRLLEIISSAIRNNEPLLLVGPTGIGKTTCLQVIARALGKKLHVVNMSSQTDAADLLGGYVPATLDRILRNLYDAITGSLGLYISVRKNQIFVTELHKSYAEKDIAKFLANCETALSGMRQVLRKEVGEVVEQGSTEQRVSHDKKYARRGTYENSLYFLQSLGDTLEQATELHKILCHEVETKKPTMAFKYQEGLLVQALVKGDWILIDEINLASYDLLDVISQLVNPEHNEIAIPDKGFVAKNPHFRVFAAMNPGSDVGKKDLPPTIRRCFTEINVSEMSDDVDIVALTKSYLRMDDAMIEDRQGLDPNVVYQLFTVLKARAKTDLVTAAEAKSPCFSLRSLCRALSFAHRFRAAAGLRRSMYEGFMLAFGSMLNEKSRQAVHALILDKLLNGNKEYLLNPFIIQPFNKPCTAMIFQATTKDEAVTVEYQEPQAAHGFLEEEKSRARSTDYVLTKSTRSYMTTISRAIAAQLPILLEGTTSSGKTSLIKHIAKQFGCPITRINNHEHTDLSEYFGSYQPDPLTGQLVFKDGPLVTGMKQGHWVILDELNMASSEILEALNRLLDDNRELLVPDTQEIVRPAPGFLLFATQNPSGSYAGRKMLSEAFQNRFIMIEFADISTEELKEILINRSTSRHLAPQYCEKLITTIQAIKMQLSHRNNNAVMTNALITLRDLFRVADRLPRTLTELAMGIFELIGERQRDPADKQLVAEIIAKNLGLKTFSVSAAEQEYAIRVRPIQSMIEKALKAGADSPKSAFLLKFQDIVWTPSMIRLFALLFTSVSNGESPLLVGVSGAGKTTSVELIAAIMAQQLVQVNLHKHTESADFIGSLRPLRSRESMHAHLSVLKEYAATTTNVDKAVYAEIKRLETTLGTKLFEWEDGPILNCMKRGHILLLDEVSLADESVLERLNSVLETSRELTVAENPNMPRPVIAHTGFKLIATMNPAGDYGKKELSPAMRSRLTEFWMPHIRDINEVRMILTRKLQKTAIYRLGHQQGLDVVSLLADFFAEMDRITQSGRLGDVFTLSIRDILAVCDYITEVQTKEGTELGQMLIDAVTLSILDGLPVRTQLGNMPACREVKHEMVLYLANRILSANLTDIDLIQDLTVSISKDTNELTFLQASTQTVLATIPPGPQYNHAKALRKMTSFRLDAPTTIKNACRIAKALRFQRPILLEGDPGVGKSALVSAIAEICGYSLVRINLSEQTDLSDLLGSDLPAENGFRWVDGVLLKAVKEGAFILLDELNLANQTVLEGLNSLLDHRRSLFIPELMLSVKSPDTLRIFGTQNPRSQGSGRKGLPQSFINRFLNVYVDVLKSQDYDWILSNLFTDIPTYVLDYILGSTKQLRAGLEELKFGISGGPWELNVRDMMRLCDMLTTTPGLAQGITLAHAKHYAHILFGYRFRTADDDAYVQNVLFSPHSLDSVAEATQSHHWYSLRPLWNVTEDVVKIGSLAIPRIDPVFRDVLGTKLSYAHTSCFLTAQLVALEALAVAVTQNLSCILVGSPESGKSSILRTLADVVRQPLVHISASTATDVSDLIGAYEQVDVLYDLKSVIRDLCLFVHSLPIKASYSAISFSEFLKDLTASLDREIGDGLGSKSRAISMESIVSEVVQKLLLEFMAKFSPDLDSGGLAAKNFSLFCSEILTQDTTPVDERFSPHMPTIPELCKSMASLYLSTQQSQTGRFVWRDSELIRALERGYWVELTNANFCMPSVLDRLNSLLERGGGLEILEQGLEETRSIKVHPNFRLFISYAPTSDISRALRNRSLELSIDIQVSHYNLLDIVRCVYTSSTASGVSLDPYLIKLVSLVYFELSRDNPEIVGLGLLFKWLKLLVTYHKRFSTSVGDPKAVSSWVDRSFSSVFIASTLNADLHRQYMQVYQNARLALQGDGSLEACTLVEAAAVLNQLTLGAVRKLSISNSLQHSLALLELRTTVKPLDQLVSLADQEPQIMEPFSQVSGWLAICVGHSLDFQHHKELVSNLLTSTDINPMYLLTPPEPSSQALLKYISQGYLDMYSSPDSIIHQVIKYVSLCSPFYASILKLFIEGKFTTKDSYLLLYLIELSQHLATDPNNYDYVALFFSLFELLISHSIDPSTKTYSLGQRQVMRTFFDMILTDQYFESMPRLLSGYIRSLFISAARNDLETAWLAVRKNLALARISVHYLPELFKVFRYVIERLNLCISPEGVVFLQEGLSDSITASLWKDILATVIYMACRADDQTGDYVPKLAILQDSANRIDLCASKLSGNQHPTARALAQMQSLFLLFTGKAFCMQVSDTLEGWSQRDLTTQLPILLFRSMSFYHRNAAGPITYLRGPIFVSTGEFVTSSLSVPALLTNAIEEQATSVLKSLLCRSEDFLSYVGNVINSITTIVLRLFFAALEREAPSCDFTDGSFQLFALILETIVHSSNPLLASLTQGVEDILKAIISVQLSPSPLLLSGLVLTVASLVLYLLTSIANQRDPIVMTKHREVLYRRLAKLIATSIEDSKLHALFVFGDGALSESSSIYKELSTLYNSYAEAADQYAAELLVRADDEDNTFFEDLSSQLASLDGFEVHVLTFVSGVLNLEKVLQMHESTECIEAILDGLAVAERQISTTLAALLPRLINYTVESSYYLDMTIPIASFLMCLRVGLSAVISSVYAHVCDAINAARRLSSEGIGLQITLQDLLLLIQRVVVGTGDEFLDLLCYDKFIRSCCSSKTVSTLHVARLFTLSLLQYSSCSKGVQGDVSQFLLADTLRPERVSSIAAQFEIEEARSYRKYIADHSIFKTRNQSSTAEGVSEEDELKTQIAALFPKNDSHFIKSDTSSDDEQPISMSAQTKVDYDDAYATSFFTRMNMILIIGNCILHLYTSDTEALPIQERLQNLSSILQAHVPHLSRPLVALQAVTYALSICAGGVSSNLSIRSPLTPETDRLMYPLVTGATMGLVRVLSSRSPNVDYAKLQTGKTRRAIHCEDIYSRPYPYETAEFCSTLLRKIIVRTQHLLTEWPDNVQLLDIMHVCDKLMELPVLEAPLVMFLTGAEVLVRHLETWDKGAPAVYKYVTNPNVPVPESLTKSLIHLMVTWRRVELMSWNGFFSRVHTQFSNVSLTYWPELLIASLTYQRSVTQGEPSTEAYYAQMREFLYESNVGEFPVRLKLLYTLSALLSNIEELAEPELVSSPHKTMTSAVLFSIASEAVEFAKYMNKEFEEEAAQIKKRFEDQIRIFEWNERSSYTSWLTAQNSHRLCTKIIREYTEVLQHATRAFHMGYSATYDRIPLSVTVQEYLPLSSESGMLPPALSQELVERLNYCVEQMCHGRKESETLKRNEKNRLLSDVLDVLKETLGCVLSSGFAFKQSFGWKLAHLCLPSVHSTFELMHMFHDSLCQRCNEVEPHDIERMKRIIACLNQVFVQLSELVVELADIELLSRVMRTAPTGSSKSQADSVLYVYLADNSVPQLLTTQVMSHVTKAHKMCMSLQEFLIGLPLDSCKSSPTKLHEQIGGFLERFSADSVTALNRIKIFSKFSALIKRLCSITLIPLAFFEEAKAILQQILADLSPIFSALIAVLPTAPISTFVTEHAKYLAQVTEVIDTLTETAAQCRVEEAATVSSIEWPYFALPFASVGEEGLSVEIIVDNAKKQVSAYMTAFFTSTLQPILQCATRHVVSLPVLPQKLLCQIETLKGDMQALADVLAKFIGPLISGAIALLRTGFHCHVDDDQKETDNDNQSGLGLGDGTGDQNVSKEAAKELCEDDLMGNQNDRDQQEQQEKDGDDEAIEMQNDFGGMSESLHHDIEEEDSNGSDEEEVLEKEMGDEQGEAIDERNYNEDDDSAEEYSDEQKKNTNNNNDTMELAAQEKDQDSINSELSDPSGEQHEEQADATGSTDEQAQEDDYNDLDDKNLSGQSDLSVPEADGEDETVNEELEEEQQQMSDLSNPDQDACAIEEDDDRDLPSSDENAEEHDEHEAPVDIDDNEASDEQSTYNDNDRDDAINISAQQQATNDEEEMQKDTEYDQENITDSNPDANEVGTNDQKQTHEDNDQFRQENIEDQWEAESTENSQGEGAESADLKEGNPDMSLEEFQRIWKERLNIHDRESEKDEAAEPQDMPLQSNKTVEFDDSKSGRDGALGLTESKHRNLTNQEFDNPNEERNVEHNSSCETSQSSHDRPPAEHLNPEISDEGEESSTASDKQEQAVLSHMRESSKDLLNPEGEVYQELAVSLASEETKRAPEDVAAASARGNHLLLDLIKQTSAAAFSLAERLRIILEPTVTSDLKGDFRTGKKLNLRRIIPFIASEFQKDKIWLRRTKPSKRVYQVLLAVDDSSSMAPIAKYALQAITLLFNACKFLEVGQLSVFSFGQKFELLLPITDQYNDASLAYAIGSFTFAQNETRVSDAISIASDYLDSVRFFKGSDSALQLLLMISDGRLKEKGGVAREIRKCMGRGQLPVLIVLDTDKKSIMDIKSVSFITDSSGKRVRQTSMYLDDFPFQCYALLRHIEDLPETLVAVIKRWIESVSVYNAV.

AAA-ATPase protomer stretches follow at residues 12–161, 324–689, 797–1049, 1096–1375, 1489–1738, and 1821–2110; these read EVLR…PLVL, RSLD…HRFR, MTTI…AEII, KFQD…DYIT, APTT…FGYR, and ALEA…SIDI. Residues 31–38, 356–363, 814–821, 1127–1134, 1513–1520, and 1839–1846 each bind ATP; these read GPSASGRT, GPTGIGKT, GTTSSGKT, GVSGAGKT, GDPGVGKS, and GSPESGKS. The linker stretch occupies residues 2197–4058; it reads SVFIASTLNA…DGTGDQNVSK (1862 aa). Disordered regions lie at residues 4033-4056 and 4108-4523; these read DQKE…DQNV and IEEE…LLNP. 5 stretches are compositionally biased toward acidic residues: residues 4109-4133, 4141-4150, 4226-4241, 4282-4291, and 4315-4330; these read EEED…QGEA, EDDDSAEEYS, ADGE…EEEQ, VDIDDNEASD, and NDEE…DQEN. Over residues 4331–4346 the composition is skewed to polar residues; sequence ITDSNPDANEVGTNDQ. 3 stretches are compositionally biased toward basic and acidic residues: residues 4347–4360, 4394–4415, and 4429–4438; these read KQTH…RQEN, EFQR…KDEA, and VEFDDSKSGR. Residues 4468-4477 are compositionally biased toward polar residues; it reads HNSSCETSQS. A compositionally biased stretch (basic and acidic residues) spans 4478–4488; it reads SHDRPPAEHLN. A VWFA domain is found at 4629–4818; it reads QVLLAVDDSS…RHIEDLPETL (190 aa).

The protein belongs to the midasin family. In terms of assembly, associates with pre-60S ribosomes in the nucleoplasm.

It is found in the nucleus. Its subcellular location is the nucleolus. The protein resides in the nucleoplasm. Functionally, nuclear chaperone required for maturation and nuclear export of pre-60S ribosome subunits. Functions at successive maturation steps to remove ribosomal factors at critical transition points, first driving the exit of early pre-60S particles from the nucleolus and then driving late pre-60S particles from the nucleus. This is Midasin (MDN1) from Giardia intestinalis (Giardia lamblia).